The primary structure comprises 314 residues: Methionyl-tRNA formyltransferase (314 aa).

110–113 lines the (6S)-5,6,7,8-tetrahydrofolate pocket; it reads SLLP.

This sequence belongs to the Fmt family.

The catalysed reaction is L-methionyl-tRNA(fMet) + (6R)-10-formyltetrahydrofolate = N-formyl-L-methionyl-tRNA(fMet) + (6S)-5,6,7,8-tetrahydrofolate + H(+). In terms of biological role, attaches a formyl group to the free amino group of methionyl-tRNA(fMet). The formyl group appears to play a dual role in the initiator identity of N-formylmethionyl-tRNA by promoting its recognition by IF2 and preventing the misappropriation of this tRNA by the elongation apparatus. The chain is Methionyl-tRNA formyltransferase from Bacillus anthracis (strain A0248).